The following is a 65-amino-acid chain: uncharacterized protein (65 aa).

This is an uncharacterized protein from Treponema pallidum (strain Nichols).